The chain runs to 123 residues: Large ribosomal subunit protein uL29 (123 aa).

At lysine 19 the chain carries N6-acetyllysine. Residue lysine 25 forms a Glycyl lysine isopeptide (Lys-Gly) (interchain with G-Cter in SUMO2) linkage. The residue at position 29 (serine 29) is a Phosphoserine. Lysine 43 is modified (N6-acetyllysine).

The protein belongs to the universal ribosomal protein uL29 family. As to quaternary structure, component of the large ribosomal subunit.

The protein resides in the cytoplasm. Component of the large ribosomal subunit. The ribosome is a large ribonucleoprotein complex responsible for the synthesis of proteins in the cell. This is Large ribosomal subunit protein uL29 (RPL35) from Sus scrofa (Pig).